The following is a 391-amino-acid chain: Odorant receptor 67d (391 aa).

Residues 1-45 (MLKMAKVEPVERYCKVIRMIRFCVGFCGNDVADPNFRMWWLTYAV) lie on the Cytoplasmic side of the membrane. A helical transmembrane segment spans residues 46 to 66 (MAAIAFFFACTGYTIYVGVVI). Over 67-71 (NGDLT) the chain is Extracellular. Residues 72–92 (IILQALAMVGSAVQGLTKLLV) form a helical membrane-spanning segment. The Cytoplasmic portion of the chain corresponds to 93-140 (TANNASHMREVQNTYEDIYREYGSKGDEYAKCLEKRIRITWTLLIGFM). The chain crosses the membrane as a helical span at residues 141 to 161 (LVYIILLGLVITFPIFYLLIL). The Extracellular portion of the chain corresponds to 162–164 (HQK). A helical membrane pass occupies residues 165–185 (VLVMQFLIPFLDHTTDGGHLI). Residues 186 to 191 (LTAAHV) lie on the Cytoplasmic side of the membrane. A helical membrane pass occupies residues 192–212 (ILITFGGFGNYGGDMYLFLFV). The Extracellular segment spans residues 213 to 268 (THVPLIKDIFCVKLTEFNELVMKRNDFPKVRAMLCDLLVWHQLYTRMLQTTKKIYS). A helical transmembrane segment spans residues 269–289 (IVLFVQLSTTCVGLLCTISCI). The Cytoplasmic portion of the chain corresponds to 290 to 297 (FMKAWPAA). The helical transmembrane segment at 298 to 318 (PLYLLYAAITLYTFCGLGTLV) threads the bilayer. The Extracellular segment spans residues 319 to 391 (ENSNEDFLSV…FSMMLMNYLG (73 aa)).

The protein belongs to the insect chemoreceptor superfamily. Heteromeric odorant receptor channel (TC 1.A.69) family. Or67d subfamily. Interacts with Orco. Complexes exist early in the endomembrane system in olfactory sensory neurons (OSNs), coupling these complexes to the conserved ciliary trafficking pathway. As to expression, expressed in antenna.

The protein resides in the cell membrane. In terms of biological role, plays a role in detection and sensitivity to pheromones and signal transduction of the fatty-acid-derived male pheromone 11-cis vaccenyl acetate (cVA). Acts in concert with Snmp and lush to capture cVA molecules on the surface of Or67d expressing olfactory dendrites and facilitate their transfer to the odorant-receptor Orco complex. Necessary to mediate behavioral responses to cVA by regulating both male and female mating behavior. Activation of Or67d neurons by cVA inhibits courtship of other males, whereas in females their activation promotes receptivity to other males. May form a complex with Orco to form odorant-sensing units, providing sensitive and prolonged odorant signaling and calcium permeability. The sequence is that of Odorant receptor 67d (Or67d) from Drosophila melanogaster (Fruit fly).